Consider the following 141-residue polypeptide: Large ribosomal subunit protein uL11 (141 aa).

The protein belongs to the universal ribosomal protein uL11 family. Part of the ribosomal stalk of the 50S ribosomal subunit. Interacts with L10 and the large rRNA to form the base of the stalk. L10 forms an elongated spine to which L12 dimers bind in a sequential fashion forming a multimeric L10(L12)X complex. Post-translationally, one or more lysine residues are methylated.

Functionally, forms part of the ribosomal stalk which helps the ribosome interact with GTP-bound translation factors. In Campylobacter lari (strain RM2100 / D67 / ATCC BAA-1060), this protein is Large ribosomal subunit protein uL11.